The following is a 1256-amino-acid chain: Bifunctional autolysin (1256 aa).

The N-terminal stretch at 1–29 (MAKKFNYKLPSMVALTLVGSAVTAHQVQA) is a signal peptide. Over residues 103-138 (GDTRANQSATTNNTQPVAKSTSTTAPKTNTNVTNAG) the composition is skewed to polar residues. 3 disordered regions span residues 103–151 (GDTR…NSEN), 172–219 (KTAA…KYKP), and 419–440 (TQST…PSTG). 2 stretches are compositionally biased toward low complexity: residues 172–196 (KTAA…KVTT) and 421–439 (STTT…KPST). Residues 199–775 (ASAQPRSVAA…AVAQPKTAVK (577 aa)) form an N-acetylmuramoyl-L-alanine amidase region. 7 consecutive GW domains span residues 443–517 (TVAA…YNTA), 519–593 (SPVN…DTAK), 612–686 (TVSS…YNNA), 688–762 (SPVN…VPAA), 784–859 (TTQT…VQNL), 861–936 (KEVK…APTA), and 943–1017 (AAKD…KELI). The tract at residues 776 to 1256 (AYTVTKPQTT…GKYFDIPQYK (481 aa)) is endo-beta-N-acetylglucosaminidase.

This sequence in the N-terminal section; belongs to the N-acetylmuramoyl-L-alanine amidase 2 family. It in the C-terminal section; belongs to the glycosyl hydrolase 73 family. In terms of assembly, oligomer; forms a ring structure at the cell surface which is important for efficient partitioning of daughter cells after cell division. In terms of processing, undergoes proteolytic processing to generate the two extracellular lytic enzymes, probably at the septal region on the cell surface.

It localises to the secreted. It catalyses the reaction Hydrolyzes the link between N-acetylmuramoyl residues and L-amino acid residues in certain cell-wall glycopeptides.. The catalysed reaction is an N(4)-(oligosaccharide-(1-&gt;3)-[oligosaccharide-(1-&gt;6)]-beta-D-Man-(1-&gt;4)-beta-D-GlcNAc-(1-&gt;4)-alpha-D-GlcNAc)-L-asparaginyl-[protein] + H2O = an oligosaccharide-(1-&gt;3)-[oligosaccharide-(1-&gt;6)]-beta-D-Man-(1-&gt;4)-D-GlcNAc + N(4)-(N-acetyl-beta-D-glucosaminyl)-L-asparaginyl-[protein]. In terms of biological role, endohydrolysis of the di-N-acetylchitobiosyl unit in high-mannose glycopeptides and glycoproteins containing the -[(Man)5(GlcNAc)2]-Asn structure. One N-acetyl-D-glucosamine residue remains attached to the protein; the rest of the oligosaccharide is released intact. Cleaves the peptidoglycan connecting the daughter cells at the end of the cell division cycle, resulting in the separation of the two newly divided cells. Acts as an autolysin in penicillin-induced lysis. The polypeptide is Bifunctional autolysin (atl) (Staphylococcus aureus (strain COL)).